The sequence spans 119 residues: Large ribosomal subunit protein uL18 (119 aa).

Belongs to the universal ribosomal protein uL18 family. Part of the 50S ribosomal subunit; part of the 5S rRNA/L5/L18/L25 subcomplex. Contacts the 5S and 23S rRNAs.

In terms of biological role, this is one of the proteins that bind and probably mediate the attachment of the 5S RNA into the large ribosomal subunit, where it forms part of the central protuberance. The polypeptide is Large ribosomal subunit protein uL18 (Malacoplasma penetrans (strain HF-2) (Mycoplasma penetrans)).